The sequence spans 814 residues: Oxysterol-binding protein-related protein 1C (814 aa).

The 133-residue stretch at glycine 103–aspartate 235 folds into the PH domain. Residues leucine 300–asparagine 367 are a coiled coil. 2 disordered regions span residues valine 319–glutamate 366 and serine 379–lysine 411. Residues glutamate 347 to glutamate 366 are compositionally biased toward acidic residues. The span at serine 379 to serine 394 shows a compositional bias: low complexity. Positions serine 395–aspartate 407 are enriched in acidic residues.

This sequence belongs to the OSBP family. In terms of tissue distribution, expressed in roots, leaves, stems, flowers and pollen.

May be involved in the transport of sterols. The polypeptide is Oxysterol-binding protein-related protein 1C (ORP1C) (Arabidopsis thaliana (Mouse-ear cress)).